The primary structure comprises 428 residues: UPF0229 protein YeaH (428 aa).

Residues 77 to 90 (PGNDHFIQNDRIER) show a composition bias toward basic and acidic residues. The tract at residues 77-111 (PGNDHFIQNDRIERPQSGGGGGSGSGQGQASQDGE) is disordered. Gly residues predominate over residues 93–103 (SGGGGGSGSGQ).

Belongs to the UPF0229 family.

The sequence is that of UPF0229 protein YeaH from Salmonella typhi.